Consider the following 1394-residue polypeptide: Tubulin glycylase 3E (1394 aa).

Disordered regions lie at residues 201-230 (KKKS…QRKE), 563-582 (NQKD…QNSI), 620-663 (DENE…TSNF), and 682-706 (STVK…NLKE). Residues 205–216 (NFQNKSQSQLNN) show a composition bias toward low complexity. The segment covering 217–230 (HKNEEKKPSQQRKE) has biased composition (basic and acidic residues). Positions 568–582 (QSNQTSSVISQQNSI) are enriched in low complexity. Positions 627–655 (KENVLQQKKNQSNQIVTSQQQSNNYFKQE) are enriched in polar residues. The segment covering 682–703 (STVKNSDNNNQNQTNPQNQNTN) has biased composition (low complexity). In terms of domain architecture, TTL spans 911–1250 (RFIFNITVIA…QNNLQEDLEI (340 aa)). Residues 1058–1061 (QKYI), Lys1079, and Asp1081 each bind ATP. 2 IQ domains span residues 1320–1349 (QYWG…QKFT) and 1348–1377 (FTFA…QQQT).

The protein localises to the cell projection. It localises to the cilium. It is found in the cytoplasm. Its subcellular location is the cytoskeleton. The protein resides in the cilium axoneme. Its function is as follows. Probable glycylase which modifies tubulin, generating side chains of glycine on the gamma-carboxyl groups of specific glutamate residues within the C-terminal tail of tubulin. The protein is Tubulin glycylase 3E (TTLL3E) of Tetrahymena thermophila (strain SB210).